Here is a 327-residue protein sequence, read N- to C-terminus: uncharacterized protein (327 aa).

The disordered stretch occupies residues 129-306 (TPLQNQEATT…DNKKTVTTSS (178 aa)). The span at 130-144 (PLQNQEATTSPTIES) shows a compositional bias: polar residues. Basic and acidic residues-rich tracts occupy residues 184–196 (KSVE…DRNV) and 233–276 (TKDE…EKIV).

This is an uncharacterized protein from Caenorhabditis elegans.